A 453-amino-acid polypeptide reads, in one-letter code: Adenosylmethionine-8-amino-7-oxononanoate aminotransferase (453 aa).

Gly-118–Ser-119 serves as a coordination point for pyridoxal 5'-phosphate. Residue Tyr-151 coordinates substrate. Residue Asp-258 coordinates pyridoxal 5'-phosphate. Substrate-binding residues include Lys-287, Gly-322, and Arg-417. At Lys-287 the chain carries N6-(pyridoxal phosphate)lysine.

It belongs to the class-III pyridoxal-phosphate-dependent aminotransferase family. BioA subfamily. In terms of assembly, homodimer. It depends on pyridoxal 5'-phosphate as a cofactor.

It localises to the cytoplasm. The enzyme catalyses (8S)-8-amino-7-oxononanoate + S-adenosyl-L-methionine = S-adenosyl-4-methylsulfanyl-2-oxobutanoate + (7R,8S)-7,8-diammoniononanoate. It participates in cofactor biosynthesis; biotin biosynthesis; 7,8-diaminononanoate from 8-amino-7-oxononanoate (SAM route): step 1/1. Its function is as follows. Catalyzes the transfer of the alpha-amino group from S-adenosyl-L-methionine (SAM) to 7-keto-8-aminopelargonic acid (KAPA) to form 7,8-diaminopelargonic acid (DAPA). It is the only aminotransferase known to utilize SAM as an amino donor. In Geobacter sulfurreducens (strain ATCC 51573 / DSM 12127 / PCA), this protein is Adenosylmethionine-8-amino-7-oxononanoate aminotransferase.